Reading from the N-terminus, the 632-residue chain is tRNA 5-methylaminomethyl-2-thiouridine biosynthesis bifunctional protein MnmC (632 aa).

Residues 1–247 (MNSRIFPAAM…KWHMTLGQRL (247 aa)) form a tRNA (mnm(5)s(2)U34)-methyltransferase region. Residues 267–632 (VGAGLAGAAV…TDLLAQIAPR (366 aa)) are FAD-dependent cmnm(5)s(2)U34 oxidoreductase.

It in the N-terminal section; belongs to the methyltransferase superfamily. tRNA (mnm(5)s(2)U34)-methyltransferase family. In the C-terminal section; belongs to the DAO family. It depends on FAD as a cofactor.

It is found in the cytoplasm. The catalysed reaction is 5-aminomethyl-2-thiouridine(34) in tRNA + S-adenosyl-L-methionine = 5-methylaminomethyl-2-thiouridine(34) in tRNA + S-adenosyl-L-homocysteine + H(+). Catalyzes the last two steps in the biosynthesis of 5-methylaminomethyl-2-thiouridine (mnm(5)s(2)U) at the wobble position (U34) in tRNA. Catalyzes the FAD-dependent demodification of cmnm(5)s(2)U34 to nm(5)s(2)U34, followed by the transfer of a methyl group from S-adenosyl-L-methionine to nm(5)s(2)U34, to form mnm(5)s(2)U34. The chain is tRNA 5-methylaminomethyl-2-thiouridine biosynthesis bifunctional protein MnmC from Bordetella bronchiseptica (strain ATCC BAA-588 / NCTC 13252 / RB50) (Alcaligenes bronchisepticus).